The sequence spans 946 residues: Atos homolog protein A (946 aa).

A transactivation domain 1 (TAD1) region spans residues 24 to 32 (ALLITEGRT). A compositionally biased stretch (basic and acidic residues) spans 34 to 43 (EHSVKGRTEG). Disordered stretches follow at residues 34-58 (EHSV…APNK), 246-271 (SVTQ…FTKP), 484-524 (FQSS…TGNQ), and 547-567 (SCTD…SQKV). 2 stretches are compositionally biased toward polar residues: residues 247–267 (VTQP…SQHA) and 484–500 (FQSS…NENI). 2 stretches are compositionally biased toward basic and acidic residues: residues 503–517 (LPEK…HGEI) and 547–560 (SCTD…KDNP). The tract at residues 749–806 (LLGNFEESVLNYRFEPLGVVEGFTAEVGASGIFCPTHMTLPVKVSFYSVSDDNAPSPY) is required for macropage invasion. The transactivation domain 2 (TAD2) stretch occupies residues 833–841 (FNPNKTVVK).

The protein belongs to the ATOS family.

The protein localises to the nucleus. In terms of biological role, transcription regulator that syncronizes transcriptional and translational programs to promote macrophage invasion of tissues. This Xenopus tropicalis (Western clawed frog) protein is Atos homolog protein A (atosa).